Here is a 351-residue protein sequence, read N- to C-terminus: Uroporphyrinogen decarboxylase (351 aa).

Substrate contacts are provided by residues 25 to 29 (RQAGR), aspartate 74, tyrosine 151, serine 206, and histidine 325.

It belongs to the uroporphyrinogen decarboxylase family. Homodimer.

Its subcellular location is the cytoplasm. The enzyme catalyses uroporphyrinogen III + 4 H(+) = coproporphyrinogen III + 4 CO2. Its pathway is porphyrin-containing compound metabolism; protoporphyrin-IX biosynthesis; coproporphyrinogen-III from 5-aminolevulinate: step 4/4. In terms of biological role, catalyzes the decarboxylation of four acetate groups of uroporphyrinogen-III to yield coproporphyrinogen-III. In Chlorobium phaeobacteroides (strain BS1), this protein is Uroporphyrinogen decarboxylase.